Reading from the N-terminus, the 448-residue chain is MAANVPPSAEALTSGGAAHKTAEDIANQYDLLPKLIPYLDRHLVFPLLEFSSGQDDDSEIVRAKYELLKHTNMTDYVANLWQEINNSDTIPDEFVKKREEVLAKLQHYQNESEKITELLQDEAVVGNLRSDKVANLRFLEEQHGVTIEMVNSLYDYGRFQYSCGSYGNAAELLYQFRVLSTDNDKVASATWGKLASEILTTNWEAAMEEVQKAKDSIETRLFNNPVGQLHNRSWLIHWSLFPFFNHDPARDVLTDLFFSPAYINTIQTSCPWILRYLAAAVITNRNRAHKNSSVYQKQLKDLIRVVRQEGYEYSDPITDFVKALYVDFDFEEAQKKLGEAEEVLRGDFFLVSAADAFVEAARHLISESYCKIHQRIDIKDLSTRLGLNQDEGEKWIVNLIRDTRVDAKIDYKEGTVIMNHPPQSVYQQVIEKTKGAFFRTQVLRFVAS.

Residues 254–423 (TDLFFSPAYI…GTVIMNHPPQ (170 aa)) enclose the PCI domain.

This sequence belongs to the eIF-3 subunit E family. In terms of assembly, component of the eukaryotic translation initiation factor 3 (eIF-3) complex.

It localises to the cytoplasm. Its function is as follows. Component of the eukaryotic translation initiation factor 3 (eIF-3) complex, which is involved in protein synthesis of a specialized repertoire of mRNAs and, together with other initiation factors, stimulates binding of mRNA and methionyl-tRNAi to the 40S ribosome. The eIF-3 complex specifically targets and initiates translation of a subset of mRNAs involved in cell proliferation. This is Eukaryotic translation initiation factor 3 subunit E (int6) from Emericella nidulans (strain FGSC A4 / ATCC 38163 / CBS 112.46 / NRRL 194 / M139) (Aspergillus nidulans).